The sequence spans 242 residues: MENKEKIYEGKAKIIFATLNPLEVIQHFKDEITAFNNKKAAIIHEKGILNNYISSFLMKKLIDKGIKTHFISLLNQREQLVKKITIIPIEVVIRNLAAGNFSKRFQIADGTPFKSPIIEFYYKNDELSDPMVSEGHILSFQWLTNQELEKIKILSLKINNILSELFFNVGIKLVDFKLEFGKLHNDEQSDLFLADEISPDTCRLWDISTNKRLDKDRYRLNLGNVIEGYREVAHKLNAIPNL.

Belongs to the SAICAR synthetase family.

The enzyme catalyses 5-amino-1-(5-phospho-D-ribosyl)imidazole-4-carboxylate + L-aspartate + ATP = (2S)-2-[5-amino-1-(5-phospho-beta-D-ribosyl)imidazole-4-carboxamido]succinate + ADP + phosphate + 2 H(+). The protein operates within purine metabolism; IMP biosynthesis via de novo pathway; 5-amino-1-(5-phospho-D-ribosyl)imidazole-4-carboxamide from 5-amino-1-(5-phospho-D-ribosyl)imidazole-4-carboxylate: step 1/2. This is Phosphoribosylaminoimidazole-succinocarboxamide synthase from Ehrlichia chaffeensis (strain ATCC CRL-10679 / Arkansas).